The sequence spans 404 residues: MSVKPSWGPGPSEGVTAVPTSDLGEIHNWTELLDLFNHTLSECHVELSQSTKRVVLFALYLAMFVVGLVENLLVICVNWRGSGRAGLMNLYILNMAIADLGIVLSLPVWMLEVTLDYTWLWGSFSCRFTHYFYFVNMYSSIFFLVCLSVDRYVTLTSASPSWQRYQHRVRRAMCAGIWVLSAIIPLPEVVHIQLVEGPEPMCLFMAPFETYSTWALAVALSTTILGFLLPFPLITVFNVLTACRLRQPGQPKSRRHCLLLCAYVAVFVMCWLPYHVTLLLLTLHGTHISLHCHLVHLLYFFYDVIDCFSMLHCVINPILYNFLSPHFRGRLLNAVVHYLPKDQTKAGTCASSSSCSTQHSIIITKGDSQPAAAAPHPEPSLSFQAHHLLPNTSPISPTQPLTPS.

The Extracellular segment spans residues 1–57; that stretch reads MSVKPSWGPGPSEGVTAVPTSDLGEIHNWTELLDLFNHTLSECHVELSQSTKRVVLF. Residues asparagine 28 and asparagine 37 are each glycosylated (N-linked (GlcNAc...) asparagine). A helical membrane pass occupies residues 58-79; it reads ALYLAMFVVGLVENLLVICVNW. At 80–90 the chain is on the cytoplasmic side; sequence RGSGRAGLMNL. Residues 91–113 form a helical membrane-spanning segment; that stretch reads YILNMAIADLGIVLSLPVWMLEV. Over 114–127 the chain is Extracellular; sequence TLDYTWLWGSFSCR. Cysteine 126 and cysteine 202 form a disulfide bridge. The chain crosses the membrane as a helical span at residues 128-149; the sequence is FTHYFYFVNMYSSIFFLVCLSV. The Cytoplasmic portion of the chain corresponds to 150–170; the sequence is DRYVTLTSASPSWQRYQHRVR. The helical transmembrane segment at 171–193 threads the bilayer; it reads RAMCAGIWVLSAIIPLPEVVHIQ. Residues 194 to 217 lie on the Extracellular side of the membrane; the sequence is LVEGPEPMCLFMAPFETYSTWALA. Residues 218–239 traverse the membrane as a helical segment; that stretch reads VALSTTILGFLLPFPLITVFNV. The Cytoplasmic portion of the chain corresponds to 240–258; sequence LTACRLRQPGQPKSRRHCL. The helical transmembrane segment at 259-280 threads the bilayer; the sequence is LLCAYVAVFVMCWLPYHVTLLL. The Extracellular portion of the chain corresponds to 281-299; it reads LTLHGTHISLHCHLVHLLY. The helical transmembrane segment at 300-320 threads the bilayer; the sequence is FFYDVIDCFSMLHCVINPILY. Residues 321-404 are Cytoplasmic-facing; sequence NFLSPHFRGR…ISPTQPLTPS (84 aa).

It belongs to the G-protein coupled receptor 1 family. In terms of tissue distribution, highly expressed in heart, skeletal muscle, immune system, adrenal gland and liver.

It is found in the cell membrane. Orphan receptor. The sequence is that of G-protein coupled receptor 182 (GPR182) from Homo sapiens (Human).